A 167-amino-acid chain; its full sequence is N-alpha-acetyltransferase (167 aa).

The N-acetyltransferase domain maps to 12-167 (FTLRNARMDD…EDAYLMARPL (156 aa)). Substrate is bound at residue Tyr37. His88 contributes to the Zn(2+) binding site. Acetyl-CoA is bound by residues 92 to 94 (IAV) and 100 to 105 (RKGIAT). Glu127 provides a ligand contact to Zn(2+). Acetyl-CoA-binding positions include Asn132 and 139–141 (YEK). Position 154 (Tyr154) interacts with substrate.

Belongs to the acetyltransferase family. ARD1 subfamily. As to quaternary structure, homodimer.

It is found in the cytoplasm. The enzyme catalyses N-terminal L-alanyl-[protein] + acetyl-CoA = N-terminal N(alpha)-acetyl-L-alanyl-[protein] + CoA + H(+). It catalyses the reaction N-terminal L-seryl-[protein] + acetyl-CoA = N-terminal N(alpha)-acetyl-L-seryl-[protein] + CoA + H(+). It carries out the reaction N-terminal L-methionyl-L-leucyl-[protein] + acetyl-CoA = N-terminal N(alpha)-acetyl-L-methionyl-L-leucyl-[protein] + CoA + H(+). The catalysed reaction is N-terminal L-methionyl-L-glutamyl-[protein] + acetyl-CoA = N-terminal N(alpha)-acetyl-L-methionyl-L-glutamyl-[protein] + CoA + H(+). In terms of biological role, displays alpha (N-terminal) acetyltransferase activity. Catalyzes the covalent attachment of an acetyl moiety from acetyl-CoA to the free alpha-amino group at the N-terminus of a protein. NAT is able to acetylate the alpha-amino group of methionine, alanine and serine N-terminal residue substrates, however it has a preference for Ser-N-terminal substrates. This chain is N-alpha-acetyltransferase, found in Saccharolobus solfataricus (strain ATCC 35092 / DSM 1617 / JCM 11322 / P2) (Sulfolobus solfataricus).